Reading from the N-terminus, the 517-residue chain is MLEKTAARQIGSCLMRCRTLDTTSPLWTGFSRLSTAPLIHEAREDGSLASQTLPYEAIPTTGRSAWFNLFQFWRKNSFQHMHLAMEENFQNLGPIYREKLGTHNSVNIMLPQDVARLFQSEGIFPRRMTMEAWSKHRELRNHKQGVFLLNGEAWRSDRIILNKEVLSLAGVKKFLPFLDEAAADFVTFMKKRMSKNTRGSLTVDLYADLFRFTLEASSYVLYGQRLGLLEEHPNADTLRFISAVETVLKTTLPLLYYPHQILQLFQTRLWNEHMHAWDVIFEQADRCIQNIYQEYCLGQERGYSGIMAELLLQAELPLDSIKANITELMAGGVDTTAMPLLFTLFELARNPSVQRELREEIRKAEAQNPNDLNQLLNSLPLLKGAIKETLRLYPVGITVQRHLIKDIVLHNYHIPAGTLVQVGLYPMGRSPLLFQDALRYDPARWLKREDTNFKALAFGFGSRQCIGRRIAETEITLFLMHMLKNFQIDTVSKDDIKTVFGFILMPEKPPLLTFRPI.

The transit peptide at 1-45 (MLEKTAARQIGSCLMRCRTLDTTSPLWTGFSRLSTAPLIHEARED) directs the protein to the mitochondrion. Cys465 lines the heme pocket.

Belongs to the cytochrome P450 family. Requires heme as cofactor.

Its subcellular location is the mitochondrion membrane. The enzyme catalyses a steroid + 2 reduced [adrenodoxin] + O2 + 2 H(+) = an 11beta-hydroxysteroid + 2 oxidized [adrenodoxin] + H2O. Has 11 beta-hydroxylation, 18-hydroxylation activities and aldosterone synthetic activity. Catalyzes the final steps of glucocorticoid and mineralocorticoid biosynthesis. This Aquarana catesbeiana (American bullfrog) protein is Cytochrome P450 11B, mitochondrial (CYP11B).